The primary structure comprises 147 residues: SPI-1 type 3 secretion system pilotin (147 aa).

The first 15 residues, 1–15, serve as a signal peptide directing secretion; it reads MKKFYSCLPVFLLIG. C16 carries N-palmitoyl cysteine lipidation. A lipid anchor (S-diacylglycerol cysteine) is attached at C16.

This sequence belongs to the InvH family.

It is found in the cell outer membrane. Involved in the synthesis of the type III secretion system (T3SS), also called injectisome, which is used to inject bacterial effector proteins into eukaryotic host cells. Pilot protein that is required for the proper localization of the secretin InvG/SctC in the outer membrane. Necessary for efficient adherence and entry of these organisms into cultured epithelial cells. The sequence is that of SPI-1 type 3 secretion system pilotin from Salmonella choleraesuis (strain SC-B67).